The following is a 404-amino-acid chain: Cysteine desulfurase IscS (404 aa).

Residues 75 to 76 (AT), Asn155, Gln183, and 203 to 205 (SAH) each bind pyridoxal 5'-phosphate. The residue at position 206 (Lys206) is an N6-(pyridoxal phosphate)lysine. Thr243 lines the pyridoxal 5'-phosphate pocket. Cys328 acts as the Cysteine persulfide intermediate in catalysis. Position 328 (Cys328) interacts with [2Fe-2S] cluster.

Belongs to the class-V pyridoxal-phosphate-dependent aminotransferase family. NifS/IscS subfamily. As to quaternary structure, homodimer. Forms a heterotetramer with IscU, interacts with other sulfur acceptors. Requires pyridoxal 5'-phosphate as cofactor.

It is found in the cytoplasm. It catalyses the reaction (sulfur carrier)-H + L-cysteine = (sulfur carrier)-SH + L-alanine. It functions in the pathway cofactor biosynthesis; iron-sulfur cluster biosynthesis. Master enzyme that delivers sulfur to a number of partners involved in Fe-S cluster assembly, tRNA modification or cofactor biosynthesis. Catalyzes the removal of elemental sulfur atoms from cysteine to produce alanine. Functions as a sulfur delivery protein for Fe-S cluster synthesis onto IscU, an Fe-S scaffold assembly protein, as well as other S acceptor proteins. The protein is Cysteine desulfurase IscS of Vibrio vulnificus (strain YJ016).